The sequence spans 365 residues: MAVMPPRTLLLLLSGALALTQTWAGSHSMRYFFTSVSRPGRGEPRFIAVGYVDDTQFVRFDSDAASQRMEPRAPWIEQEGPEYWDEETRSAKAHSQTDRVDLGTLRGYYNQSEDGSHTIQIMYGCDVGSDGRFLRGYRQDAYDGKDYIALNEDLRSWTAADMAAQITKRKWEAAHAAEQRRAYLEGTCVEWLRRYLENGKETLQRTDPPKTHMTHHPISDHEATLRCWALGFYPAEITLTWQRDGEDQTQDTELVETRPAGDGTFQKWAAVVVPSGEEQRYTCHVQHEGLPKPLTLRWEPSSQPTIPIVGIIAGLVLLGAVITGAVVAAVMWRRKSSDRKGGSYTQAASSDSAQGSDVSLTACKV.

The N-terminal stretch at 1-24 is a signal peptide; sequence MAVMPPRTLLLLLSGALALTQTWA. The segment at 25 to 114 is alpha-1; that stretch reads GSHSMRYFFT…LRGYYNQSED (90 aa). Over 25-308 the chain is Extracellular; the sequence is GSHSMRYFFT…EPSSQPTIPI (284 aa). N110 carries an N-linked (GlcNAc...) asparagine glycan. An alpha-2 region spans residues 115-206; sequence GSHTIQIMYG…ENGKETLQRT (92 aa). 2 disulfides stabilise this stretch: C125/C188 and C227/C283. An alpha-3 region spans residues 207–298; that stretch reads DPPKTHMTHH…GLPKPLTLRW (92 aa). An Ig-like C1-type domain is found at 209 to 295; the sequence is PKTHMTHHPI…QHEGLPKPLT (87 aa). Residues 299-308 form a connecting peptide region; it reads EPSSQPTIPI. A helical membrane pass occupies residues 309–332; it reads VGIIAGLVLLGAVITGAVVAAVMW. The Cytoplasmic portion of the chain corresponds to 333–365; that stretch reads RRKSSDRKGGSYTQAASSDSAQGSDVSLTACKV. The segment at 339 to 360 is disordered; sequence RKGGSYTQAASSDSAQGSDVSL. S343 carries the phosphoserine modification. At Y344 the chain carries Phosphotyrosine. The span at 346 to 359 shows a compositional bias: low complexity; the sequence is QAASSDSAQGSDVS. S349, S350, S352, S356, and S359 each carry phosphoserine.

This sequence belongs to the MHC class I family. As to quaternary structure, heterodimer of an alpha chain and a beta chain (beta-2-microglobulin).

It is found in the membrane. In terms of biological role, involved in the presentation of foreign antigens to the immune system. The protein is Patr class I histocompatibility antigen, A-2 alpha chain of Pan troglodytes (Chimpanzee).